The chain runs to 163 residues: Nucleotide-binding protein LBJ_2391 (163 aa).

The protein belongs to the YajQ family.

Its function is as follows. Nucleotide-binding protein. This chain is Nucleotide-binding protein LBJ_2391, found in Leptospira borgpetersenii serovar Hardjo-bovis (strain JB197).